The chain runs to 235 residues: Putative uridine kinase C227.14 (235 aa).

Residue 36–43 coordinates ATP; that stretch reads GGPGSGKS.

It belongs to the uridine kinase family.

The protein localises to the cytoplasm. It localises to the nucleus. It catalyses the reaction uridine + ATP = UMP + ADP + H(+). It carries out the reaction cytidine + ATP = CMP + ADP + H(+). It functions in the pathway pyrimidine metabolism; CTP biosynthesis via salvage pathway; CTP from cytidine: step 1/3. It participates in pyrimidine metabolism; UMP biosynthesis via salvage pathway; UMP from uridine: step 1/1. The protein is Putative uridine kinase C227.14 of Schizosaccharomyces pombe (strain 972 / ATCC 24843) (Fission yeast).